A 324-amino-acid chain; its full sequence is HPr kinase/phosphorylase (324 aa).

Catalysis depends on residues H146 and K167. 161 to 168 (GDSGLGKS) serves as a coordination point for ATP. S168 serves as a coordination point for Mg(2+). D185 serves as the catalytic Proton acceptor; for phosphorylation activity. Proton donor; for dephosphorylation activity. The important for the catalytic mechanism of both phosphorylation and dephosphorylation stretch occupies residues 209-218 (LEVRGLGLLD). E210 contributes to the Mg(2+) binding site. Residue R250 is part of the active site. The interval 271-276 (QVAAGR) is important for the catalytic mechanism of dephosphorylation.

The protein belongs to the HPrK/P family. Homohexamer. Mg(2+) serves as cofactor.

It catalyses the reaction [HPr protein]-L-serine + ATP = [HPr protein]-O-phospho-L-serine + ADP + H(+). It carries out the reaction [HPr protein]-O-phospho-L-serine + phosphate + H(+) = [HPr protein]-L-serine + diphosphate. Its function is as follows. Catalyzes the ATP- as well as the pyrophosphate-dependent phosphorylation of a specific serine residue in HPr, a phosphocarrier protein of the phosphoenolpyruvate-dependent sugar phosphotransferase system (PTS). HprK/P also catalyzes the pyrophosphate-producing, inorganic phosphate-dependent dephosphorylation (phosphorolysis) of seryl-phosphorylated HPr (P-Ser-HPr). The polypeptide is HPr kinase/phosphorylase (Ralstonia nicotianae (strain ATCC BAA-1114 / GMI1000) (Ralstonia solanacearum)).